The following is a 205-amino-acid chain: MKKTNDNYHSARFVMSAPNIHHLPPDQGMEVAFAGRSNAGKSSALNTLTQQKNLAKISKTPGRTQLINLFEVAEGIRLVDLPGYGYAAVPLAIKIKWQKALNEYLNKRDCLRGLVILMDIRHPLKNLDQQMIVWAINKRIPVYLLLTKVDKLSRSASKIQLDMVKEAILPFMGDIEVDVFSSLKKIGIDKLQNKLNAWFSGSVNE.

The EngB-type G domain maps to 27 to 201 (QGMEVAFAGR…QNKLNAWFSG (175 aa)). GTP-binding positions include 35 to 42 (GRSNAGKS), 62 to 66 (GRTQL), 80 to 83 (DLPG), 147 to 150 (TKVD), and 180 to 182 (FSS). Mg(2+)-binding residues include serine 42 and threonine 64.

Belongs to the TRAFAC class TrmE-Era-EngA-EngB-Septin-like GTPase superfamily. EngB GTPase family. The cofactor is Mg(2+).

Functionally, necessary for normal cell division and for the maintenance of normal septation. In Hamiltonella defensa subsp. Acyrthosiphon pisum (strain 5AT), this protein is Probable GTP-binding protein EngB.